A 206-amino-acid chain; its full sequence is uncharacterized protein (206 aa).

Positions 32–201 (VYIDAGHGGE…AADAIVNGID (170 aa)) constitute a MurNAc-LAA domain.

The protein belongs to the N-acetylmuramoyl-L-alanine amidase 3 family.

This is an uncharacterized protein from Bacillus subtilis (strain 168).